The following is a 168-amino-acid chain: Gremlin-2 (168 aa).

An N-terminal signal peptide occupies residues 1–21 (MFWKLSLSLFLVAVLVKVAEA). The N-linked (GlcNAc...) asparagine glycan is linked to asparagine 40. 4 disulfide bridges follow: cysteine 73–cysteine 123, cysteine 87–cysteine 137, cysteine 97–cysteine 155, and cysteine 101–cysteine 157. In terms of domain architecture, CTCK spans 73–163 (CKTQPLRQTV…QCRCMSVNLS (91 aa)). A glycan (N-linked (GlcNAc...) asparagine) is linked at asparagine 161.

This sequence belongs to the DAN family. Homodimer. Interacts with BMP2, BMP4 and BMP7, but has lower affinity for BMP7 than for BMP2 and BMP4. Binds heparin; this impairs the interaction with BMP2. In terms of processing, N-glycosylated.

The protein resides in the secreted. Cytokine that inhibits the activity of BMP2 and BMP4 in a dose-dependent manner, and thereby modulates signaling by BMP family members. Contributes to the regulation of embryonic morphogenesis via BMP family members. Antagonizes BMP4-induced suppression of progesterone production in granulosa cells. The polypeptide is Gremlin-2 (GREM2) (Homo sapiens (Human)).